Here is a 493-residue protein sequence, read N- to C-terminus: tRNA(Ile)-lysidine synthase (493 aa).

26-31 (SGGSDS) lines the ATP pocket.

The protein belongs to the tRNA(Ile)-lysidine synthase family.

It localises to the cytoplasm. It carries out the reaction cytidine(34) in tRNA(Ile2) + L-lysine + ATP = lysidine(34) in tRNA(Ile2) + AMP + diphosphate + H(+). Functionally, ligates lysine onto the cytidine present at position 34 of the AUA codon-specific tRNA(Ile) that contains the anticodon CAU, in an ATP-dependent manner. Cytidine is converted to lysidine, thus changing the amino acid specificity of the tRNA from methionine to isoleucine. The protein is tRNA(Ile)-lysidine synthase of Bartonella henselae (strain ATCC 49882 / DSM 28221 / CCUG 30454 / Houston 1) (Rochalimaea henselae).